The sequence spans 174 residues: uncharacterized protein (174 aa).

Residues 138–174 form a disordered region; it reads VNLTSKSSGRSDEEGTTRRAPVLKTRADFVSRKDKHR. Over residues 162 to 174 the composition is skewed to basic and acidic residues; the sequence is TRADFVSRKDKHR.

This is an uncharacterized protein from Bos taurus (Bovine).